The primary structure comprises 462 residues: tRNA(Ile2) 2-agmatinylcytidine synthetase TiaS (462 aa).

This sequence belongs to the TiaS family.

The protein localises to the cytoplasm. It catalyses the reaction cytidine(34) in tRNA(Ile2) + agmatine + ATP + H2O = 2-agmatinylcytidine(34) in tRNA(Ile2) + AMP + 2 phosphate + 2 H(+). In terms of biological role, ATP-dependent agmatine transferase that catalyzes the formation of 2-agmatinylcytidine (agm2C) at the wobble position (C34) of tRNA(Ile2), converting the codon specificity from AUG to AUA. This Haloquadratum walsbyi (strain DSM 16790 / HBSQ001) protein is tRNA(Ile2) 2-agmatinylcytidine synthetase TiaS.